The primary structure comprises 419 residues: Putative competence-damage inducible protein (419 aa).

This sequence belongs to the CinA family.

This is Putative competence-damage inducible protein from Streptococcus agalactiae serotype Ia (strain ATCC 27591 / A909 / CDC SS700).